The sequence spans 203 residues: Cardiotrophin-2 (203 aa).

Residues 1–21 (MSCSLARLCLLTLLSPPLSSA) form the signal peptide. Residue Asn-43 is glycosylated (N-linked (GlcNAc...) asparagine).

The protein belongs to the IL-6 superfamily.

It is found in the secreted. Its function is as follows. May have an important role in neuronal precursor development and maturation. This is Cardiotrophin-2 (CTF2) from Pan troglodytes (Chimpanzee).